The following is a 254-amino-acid chain: 5'-nucleotidase SurE (254 aa).

Asp8, Asp9, Ser40, and Asn93 together coordinate a divalent metal cation.

Belongs to the SurE nucleotidase family. The cofactor is a divalent metal cation.

It localises to the cytoplasm. The catalysed reaction is a ribonucleoside 5'-phosphate + H2O = a ribonucleoside + phosphate. In terms of biological role, nucleotidase that shows phosphatase activity on nucleoside 5'-monophosphates. In Methylobacterium radiotolerans (strain ATCC 27329 / DSM 1819 / JCM 2831 / NBRC 15690 / NCIMB 10815 / 0-1), this protein is 5'-nucleotidase SurE.